The following is an 88-amino-acid chain: Small ribosomal subunit protein eS21 (88 aa).

This sequence belongs to the eukaryotic ribosomal protein eS21 family. Component of the 40S small ribosomal subunit.

The protein resides in the cytoplasm. Its subcellular location is the cytosol. It is found in the rough endoplasmic reticulum. The chain is Small ribosomal subunit protein eS21 (rps-21) from Caenorhabditis elegans.